A 716-amino-acid polypeptide reads, in one-letter code: Antibacterial effector protein Tle3 (716 aa).

The segment at 68 to 87 is disordered; it reads PTLPGGQANPGYLTPAGYSL.

In terms of assembly, interacts in the cytoplasm with the adapter protein Tla3. Interacts in the periplasm with the immunity protein Tli3.

The protein resides in the secreted. It is found in the host periplasm. Neutralized by the immunity protein Tli3 in the periplasm of P.aeruginosa cells. In terms of biological role, antibacterial effector. Is toxic once delivered in the periplasm of prey bacteria. The protein is Antibacterial effector protein Tle3 of Pseudomonas aeruginosa (strain ATCC 15692 / DSM 22644 / CIP 104116 / JCM 14847 / LMG 12228 / 1C / PRS 101 / PAO1).